The sequence spans 451 residues: MAANVSPSAETLSSGAAAHPSNTAEEIANQYNLLPKLIPYLDRHLVFPLLEFSSGQDDEKEIVRAKYELLKHTNMTDYVANLWKEINNSDDIPDEFVKKREEVLAKLQQYEEESAKITQLLQDESVVANLRSDKVANLKFLEEQHGVTVEMVNSLYDYGRFQYSCGSYGNAAELLYQFRVLSTDNDKVASATWGKFASEILTTSWEAAMEEVQKVKDSIETRLFNNPLGQLQNRSWLIHWSLFPFFNHDPARDVLTDLFFSPAYINTIQTNCPWILRYLAAAVITNRNRAHKNSSVYQKQLKDLIRVVRQEGYEYNDPITDFIKALYVDFDFEEAQKKLGEAEEVLRSDFFLVSTTDAFVEAARHLISESYCKIHQRIDIKDLSTRLGLNQDEGEKWIVNLIRDTRVDAKIDYKEGTVIMNHPPQSVYQQVIEKTKGAFFRTQVLSAAVAK.

The region spanning Thr256–Gln425 is the PCI domain.

The protein belongs to the eIF-3 subunit E family. Component of the eukaryotic translation initiation factor 3 (eIF-3) complex.

The protein localises to the cytoplasm. In terms of biological role, component of the eukaryotic translation initiation factor 3 (eIF-3) complex, which is involved in protein synthesis of a specialized repertoire of mRNAs and, together with other initiation factors, stimulates binding of mRNA and methionyl-tRNAi to the 40S ribosome. The eIF-3 complex specifically targets and initiates translation of a subset of mRNAs involved in cell proliferation. This chain is Eukaryotic translation initiation factor 3 subunit E (int6), found in Aspergillus fumigatus (strain CBS 144.89 / FGSC A1163 / CEA10) (Neosartorya fumigata).